A 283-amino-acid polypeptide reads, in one-letter code: GTP cyclohydrolase MptA (283 aa).

This sequence belongs to the GTP cyclohydrolase IV family. As to quaternary structure, homodimer. Fe(2+) serves as cofactor.

It carries out the reaction GTP + H2O = 7,8-dihydroneopterin 2',3'-cyclic phosphate + formate + diphosphate + H(+). The protein operates within cofactor biosynthesis; 5,6,7,8-tetrahydromethanopterin biosynthesis. Converts GTP to 7,8-dihydro-D-neopterin 2',3'-cyclic phosphate, the first intermediate in the biosynthesis of coenzyme methanopterin. This is GTP cyclohydrolase MptA from Aeropyrum pernix (strain ATCC 700893 / DSM 11879 / JCM 9820 / NBRC 100138 / K1).